Reading from the N-terminus, the 197-residue chain is Thymidylate kinase (197 aa).

7–14 (GIDGSGKS) provides a ligand contact to ATP.

This sequence belongs to the thymidylate kinase family.

It carries out the reaction dTMP + ATP = dTDP + ADP. In terms of biological role, phosphorylation of dTMP to form dTDP in both de novo and salvage pathways of dTTP synthesis. The sequence is that of Thymidylate kinase (tmk) from Thermotoga maritima (strain ATCC 43589 / DSM 3109 / JCM 10099 / NBRC 100826 / MSB8).